Consider the following 325-residue polypeptide: G-protein coupled receptor E6 (325 aa).

7 consecutive transmembrane segments (helical) span residues 45 to 65 (LFGT…MGFF), 71 to 91 (FTPS…LWLM), 106 to 126 (IVTE…NVGM), 145 to 165 (PAAI…VIAV), 198 to 218 (LVAK…GTAL), 233 to 253 (AICV…LTAM), and 274 to 294 (VFIY…MFTG).

This sequence belongs to the G-protein coupled receptor 1 family.

Its subcellular location is the host membrane. In Equus caballus (Horse), this protein is G-protein coupled receptor E6 (E6).